A 274-amino-acid chain; its full sequence is Formamidopyrimidine-DNA glycosylase (274 aa).

Pro2 serves as the catalytic Schiff-base intermediate with DNA. Glu3 acts as the Proton donor in catalysis. Lys57 serves as the catalytic Proton donor; for beta-elimination activity. 3 residues coordinate DNA: His92, Arg111, and Lys152. The segment at 237–271 adopts an FPG-type zinc-finger fold; it reads QVYGRKGEECRECGTLIQAKVIGQRNSYFCPDCQP. Arg261 acts as the Proton donor; for delta-elimination activity in catalysis.

Belongs to the FPG family. As to quaternary structure, monomer. Requires Zn(2+) as cofactor.

The catalysed reaction is Hydrolysis of DNA containing ring-opened 7-methylguanine residues, releasing 2,6-diamino-4-hydroxy-5-(N-methyl)formamidopyrimidine.. The enzyme catalyses 2'-deoxyribonucleotide-(2'-deoxyribose 5'-phosphate)-2'-deoxyribonucleotide-DNA = a 3'-end 2'-deoxyribonucleotide-(2,3-dehydro-2,3-deoxyribose 5'-phosphate)-DNA + a 5'-end 5'-phospho-2'-deoxyribonucleoside-DNA + H(+). Its function is as follows. Involved in base excision repair of DNA damaged by oxidation or by mutagenic agents. Acts as a DNA glycosylase that recognizes and removes damaged bases. Has a preference for oxidized purines, such as 7,8-dihydro-8-oxoguanine (8-oxoG). Has AP (apurinic/apyrimidinic) lyase activity and introduces nicks in the DNA strand. Cleaves the DNA backbone by beta-delta elimination to generate a single-strand break at the site of the removed base with both 3'- and 5'-phosphates. The protein is Formamidopyrimidine-DNA glycosylase of Haemophilus ducreyi (strain 35000HP / ATCC 700724).